Consider the following 333-residue polypeptide: Phospholipid phosphatase-related protein type 1 (333 aa).

The next 3 helical transmembrane spans lie at 12–32 (IIPC…LLAY), 66–86 (FIQP…IIFV), and 126–146 (FIGV…AGQV). Residue Asn-162 is glycosylated (N-linked (GlcNAc...) asparagine). 3 helical membrane-spanning segments follow: residues 200-217 (ASLS…ITST), 223-243 (SRLA…LTGL), and 256-276 (VVAG…CVVN).

The protein belongs to the PA-phosphatase related phosphoesterase family.

Its subcellular location is the cell membrane. The protein localises to the cell projection. It is found in the neuron projection. Its function is as follows. May play a role in neurite outgrowth and neurogenesis. The protein is Phospholipid phosphatase-related protein type 1 (plppr1) of Danio rerio (Zebrafish).